The primary structure comprises 335 residues: Transcription factor bHLH63 (335 aa).

The disordered stretch occupies residues 110–160 (MTMNRDDLVEEGEEEKSKITEQNNGSTKSIKKMKHKAKKEENNFSNDSSKV). One can recognise a bHLH domain in the interval 178 to 228 (QATDSHSIAERVRREKISERMKFLQDLVPGCDKITGKAGMLDEIINYVQSL).

As to quaternary structure, homodimer. Interacts with IBH1. Binds reversibly to CRY2 after blue light illumination. Expressed constitutively in roots, leaves, and stems.

The protein resides in the nucleus. In terms of biological role, transcription factor that binds DNA to G box 5'-CACGTG-3' and, to a lower extent, to E-box 5'-CANNTG-3' in vitro. Binds to chromatin DNA of the FT gene and promotes its expression, and thus triggers flowering in response to blue light. The polypeptide is Transcription factor bHLH63 (BHLH63) (Arabidopsis thaliana (Mouse-ear cress)).